A 30-amino-acid polypeptide reads, in one-letter code: Serum amyloid P-component (30 aa).

In terms of domain architecture, Pentraxin (PTX) spans 1–30; that stretch reads APQDLSGKMFIFPQETSTANVXLTARSQDF.

This sequence belongs to the pentraxin family. As to quaternary structure, homopentamer. Discoid arrangement of 5 covalently bound subunits. The cofactor is Ca(2+).

Its subcellular location is the secreted. In Anarhichas lupus (Atlantic wolffish), this protein is Serum amyloid P-component.